A 457-amino-acid chain; its full sequence is MDSEKMDLFSKLPDEVISHILSSLPTKEAASTSVLAKKWRYLFAFVPSLDFNDSDFLHPQEGKREKDGILRSFMDFVDRVLALQGASPIKKFSLNVKTGVDPDRVDRWICNVLQRGVSHLALFMDFEEEYSLPYEISVSKTLVELKTGYGVDLYLWDDDMFLPMLKTLVLESVEFGRGQFQTLLPACPVLEELMLLNMEWKDRNVILSSSSLKNLKITSEDGCLGTLSFDTPNLVFLDYYDYVAEDYPIVNLKNLVEVGINLVLTADRINRARDNVWNLIHGIQNAEIFHISPVTFEVLSLSCEAMPVFKNLTTLNIRTVMQQGWQAMPLLLKNCPNLETLYLGGLLHTVTNKCGDVCDCIPRKKKGRSLMACPVNKIQIQGFRGTIREVHMIKHFLDFCPSLKEMEIIVETKEPTLFEIPKWLEIVEDTLMQYNEMSSCTINYRVLAPLYWRWTRK.

The 49-residue stretch at M6–S54 folds into the F-box domain.

The chain is Putative F-box protein At3g58860 from Arabidopsis thaliana (Mouse-ear cress).